The following is a 274-amino-acid chain: Bis(5'-nucleosyl)-tetraphosphatase, symmetrical (274 aa).

This sequence belongs to the Ap4A hydrolase family.

It carries out the reaction P(1),P(4)-bis(5'-adenosyl) tetraphosphate + H2O = 2 ADP + 2 H(+). Hydrolyzes diadenosine 5',5'''-P1,P4-tetraphosphate to yield ADP. The chain is Bis(5'-nucleosyl)-tetraphosphatase, symmetrical from Shewanella sp. (strain W3-18-1).